Here is a 681-residue protein sequence, read N- to C-terminus: Sodium-dependent phosphate transporter 1 (681 aa).

6 helical membrane passes run 25–45, 66–86, 106–126, 162–182, 201–221, and 234–254; these read NLWM…SVGA, ACIL…AKVS, LMAG…VASF, IVMS…ILFF, ALPI…MYTG, and GTIL…WFFV. The disordered stretch occupies residues 266–295; sequence VKSSPSESPLMEKKNNLKDHEETKMAPGDV. Phosphoserine is present on residues Ser269 and Ser273. The segment covering 275–289 has biased composition (basic and acidic residues); the sequence is LMEKKNNLKDHEETK. A run of 4 helical transmembrane segments spans residues 513 to 533, 561 to 581, 602 to 622, and 652 to 672; these read VSLL…FAHG, ATPI…LWVW, FSIE…GLPI, and IFMA…AIMA.

It belongs to the inorganic phosphate transporter (PiT) (TC 2.A.20) family. As to expression, ubiquitously expressed.

The protein localises to the cell membrane. The enzyme catalyses 2 Na(+)(out) + phosphate(out) = 2 Na(+)(in) + phosphate(in). Its function is as follows. Sodium-phosphate symporter which preferentially transports the monovalent form of phosphate with a stoichiometry of two sodium ions per phosphate ion. May play a role in extracellular matrix and cartilage calcification as well as in vascular calcification. Essential for cell proliferation but this function is independent of its phosphate transporter activity. This chain is Sodium-dependent phosphate transporter 1 (Slc20a1), found in Rattus norvegicus (Rat).